A 152-amino-acid chain; its full sequence is Small ribosomal subunit protein uS15 (152 aa).

Positions 1-11 (MARMHARRRGK) are enriched in basic residues. The tract at residues 1–25 (MARMHARRRGKSSSVRPARNEAPAW) is disordered.

It belongs to the universal ribosomal protein uS15 family. Part of the 30S ribosomal subunit.

This Methanoregula boonei (strain DSM 21154 / JCM 14090 / 6A8) protein is Small ribosomal subunit protein uS15.